Consider the following 350-residue polypeptide: Phosphotriesterase-related protein (350 aa).

The a divalent metal cation site is built by His-22, His-24, Glu-169, His-201, His-230, and Asp-298.

This sequence belongs to the metallo-dependent hydrolases superfamily. Phosphotriesterase family. It depends on a divalent metal cation as a cofactor.

The sequence is that of Phosphotriesterase-related protein from Drosophila sechellia (Fruit fly).